Consider the following 540-residue polypeptide: Phenylalanine--tRNA ligase beta subunit (540 aa).

The 77-residue stretch at 266 to 342 (LRPEKRTVSV…IAYGYDKIET (77 aa)) folds into the B5 domain. Mg(2+) contacts are provided by Asp-320, Asp-326, Glu-329, and Asp-330.

This sequence belongs to the phenylalanyl-tRNA synthetase beta subunit family. Type 2 subfamily. As to quaternary structure, tetramer of two alpha and two beta subunits. Requires Mg(2+) as cofactor.

Its subcellular location is the cytoplasm. It catalyses the reaction tRNA(Phe) + L-phenylalanine + ATP = L-phenylalanyl-tRNA(Phe) + AMP + diphosphate + H(+). The chain is Phenylalanine--tRNA ligase beta subunit from Methanocorpusculum labreanum (strain ATCC 43576 / DSM 4855 / Z).